We begin with the raw amino-acid sequence, 69 residues long: Large ribosomal subunit protein uL29 (69 aa).

Belongs to the universal ribosomal protein uL29 family.

The polypeptide is Large ribosomal subunit protein uL29 (Staphylococcus haemolyticus (strain JCSC1435)).